The sequence spans 355 residues: (3aS,4S,5R,7aS)-5-hydroxy-7a-methyl-1-oxo-octahydro-1H-indene-4-carboxyl-CoA dehydrogenase (355 aa).

FMN-binding positions include 21–23, 173–175, and 196–197; these read GMG, AGG, and GT.

Belongs to the nitronate monooxygenase family.

The catalysed reaction is (3aS,4S,5R,7aS)-5-hydroxy-7a-methyl-1-oxo-octahydro-1H-indene-4-carboxyl-CoA + NAD(+) = (5R,7aS)-5-hydroxy-7a-methyl-1-oxo-2,3,5,6,7,7a-hexahydro-1H-indene-carboxyl-CoA + NADH + H(+). The protein operates within steroid metabolism; cholesterol degradation. Its activity is regulated as follows. Requires the presence of IpdF. Involved in the final steps of cholesterol and steroid degradation. Probably catalyzes the introduction of a double bound into the C ring of 5OH-HIC-CoA, leading to the formation of (5R,7aS)-5-hydroxy-7a-methyl-1-oxo-3,5,6,7-tetrahydro-2H-indene-4-carboxyl-CoA. The polypeptide is (3aS,4S,5R,7aS)-5-hydroxy-7a-methyl-1-oxo-octahydro-1H-indene-4-carboxyl-CoA dehydrogenase (Mycobacterium tuberculosis (strain ATCC 25618 / H37Rv)).